The following is a 219-amino-acid chain: Redox-sensing transcriptional repressor Rex (219 aa).

Positions 18–57 (LYYRFIQSLYNSGKLRVSSAELSEAVKVDSATIRRDFSYF) form a DNA-binding region, H-T-H motif. 92 to 97 (GVGHLG) serves as a coordination point for NAD(+).

Belongs to the transcriptional regulatory Rex family. As to quaternary structure, homodimer.

The protein localises to the cytoplasm. Functionally, modulates transcription in response to changes in cellular NADH/NAD(+) redox state. The chain is Redox-sensing transcriptional repressor Rex from Exiguobacterium sibiricum (strain DSM 17290 / CCUG 55495 / CIP 109462 / JCM 13490 / 255-15).